The sequence spans 334 residues: Succinate receptor 1 (334 aa).

Topologically, residues Met-5–Gly-31 are extracellular. Residue Asn-8 is glycosylated (N-linked (GlcNAc...) asparagine). The chain crosses the membrane as a helical span at residues Ile-32–Leu-52. At Lys-53–Asn-59 the chain is on the cytoplasmic side. The helical transmembrane segment at Ile-60–Ile-80 threads the bilayer. Topologically, residues Arg-81–His-103 are extracellular. Residues Cys-95 and Cys-172 are joined by a disulfide bond. A helical transmembrane segment spans residues Ala-104–Ile-124. The Cytoplasmic portion of the chain corresponds to Lys-125–Glu-137. Residues Phe-138–Leu-158 form a helical membrane-spanning segment. At Pro-159–Leu-185 the chain is on the extracellular side. Asn-168 carries an N-linked (GlcNAc...) asparagine glycan. A helical transmembrane segment spans residues Ile-186 to Phe-206. Residues Tyr-207–Pro-230 are Cytoplasmic-facing. Residues Leu-231–Met-251 traverse the membrane as a helical segment. Topologically, residues Arg-252–Arg-281 are extracellular. A helical transmembrane segment spans residues Pro-282 to Phe-302. Residues Arg-303–Lys-334 lie on the Cytoplasmic side of the membrane.

It belongs to the G-protein coupled receptor 1 family. In terms of tissue distribution, expressed specifically in kidney. Highly expressed in immature dendritic cells, expression rapidly downregulates after maturation. Also expressed in macrophages.

It localises to the cell membrane. Functionally, g protein-coupled receptor for succinate able to mediate signaling through Gq/GNAQ or Gi/GNAI second messengers depending on the cell type and the processes regulated. Succinate-SUCNR1 signaling serves as a link between metabolic stress, inflammation and energy homeostasis. In macrophages, plays a range of immune-regulatory roles. During inflammation, succinate-SUCNR1 signaling may act as an anti-inflammatory mediator or boost inflammation depending on the inflammatory status of cells. Hyperpolarizes M2 macrophages versus M1 phenotype through Gq signaling by regulating the transcription of genes involved in immune function. In activated M1 macrophages, plays a pro-inflammatory role in response to LPS. Expressed in dendritic cells, where it is involved in the sensing of immunological danger and enhances immunity. Mediates succinate triggered intracelleular calcium mobilization, induces migratory responses and acts in synergy with Toll-like receptor ligands for the production of proinflammatory cytokines as well as an enhancement of antigen-specific activation of helper T cells. In the small intestine, mediates the activation of tuft cells by dietary succinate and triggers type 2 immunity. In adipocytes, plays an important role in the control of energy metabolism. In response to succinate, controls leptin expression in an AMPK-JNK-CEBPA-dependent as well as circadian clock-regulated manner. In muscle tissue, is expressed in non-muscle cells and coordinates muscle remodeling in response to the succinate produced during exercise training in a paracrine manner. In retina, acts as a mediator of vessel growth during retinal development. In response to succinate, regulates the production of angiogenic factors, including VEGF, by retinal ganglion neurons. This is Succinate receptor 1 from Homo sapiens (Human).